A 193-amino-acid polypeptide reads, in one-letter code: Probable thymidylate kinase (193 aa).

7 to 14 contacts ATP; that stretch reads GIDGSGKT.

The protein belongs to the thymidylate kinase family.

It carries out the reaction dTMP + ATP = dTDP + ADP. This Pyrobaculum calidifontis (strain DSM 21063 / JCM 11548 / VA1) protein is Probable thymidylate kinase.